A 543-amino-acid polypeptide reads, in one-letter code: Light-independent protochlorophyllide reductase subunit B (543 aa).

Asp36 contributes to the [4Fe-4S] cluster binding site. The Proton donor role is filled by Asp287. 422–423 contributes to the substrate binding site; it reads GL.

The protein belongs to the ChlB/BchB/BchZ family. In terms of assembly, protochlorophyllide reductase is composed of three subunits; BchL, BchN and BchB. Forms a heterotetramer of two BchB and two BchN subunits. [4Fe-4S] cluster serves as cofactor.

It carries out the reaction chlorophyllide a + oxidized 2[4Fe-4S]-[ferredoxin] + 2 ADP + 2 phosphate = protochlorophyllide a + reduced 2[4Fe-4S]-[ferredoxin] + 2 ATP + 2 H2O. It functions in the pathway porphyrin-containing compound metabolism; bacteriochlorophyll biosynthesis (light-independent). Component of the dark-operative protochlorophyllide reductase (DPOR) that uses Mg-ATP and reduced ferredoxin to reduce ring D of protochlorophyllide (Pchlide) to form chlorophyllide a (Chlide). This reaction is light-independent. The NB-protein (BchN-BchB) is the catalytic component of the complex. The sequence is that of Light-independent protochlorophyllide reductase subunit B from Rubrivivax gelatinosus (strain NBRC 100245 / IL144).